Here is a 500-residue protein sequence, read N- to C-terminus: Type-2 serine--tRNA ligase (500 aa).

A305 is a binding site for L-serine. C307 is a binding site for Zn(2+). R337 lines the L-serine pocket. ATP contacts are provided by residues 337 to 339 (RYE) and 348 to 349 (RV). L-serine-binding positions include 354–356 (RIE) and Q401. Position 356 (E356) interacts with Zn(2+). E430 provides a ligand contact to ATP. N433 serves as a coordination point for L-serine. C459 is a binding site for Zn(2+). R466 lines the ATP pocket.

It belongs to the class-II aminoacyl-tRNA synthetase family. Type-2 seryl-tRNA synthetase subfamily. Homodimer. Zn(2+) is required as a cofactor.

It is found in the cytoplasm. It catalyses the reaction tRNA(Ser) + L-serine + ATP = L-seryl-tRNA(Ser) + AMP + diphosphate + H(+). It carries out the reaction tRNA(Sec) + L-serine + ATP = L-seryl-tRNA(Sec) + AMP + diphosphate + H(+). The protein operates within aminoacyl-tRNA biosynthesis; selenocysteinyl-tRNA(Sec) biosynthesis; L-seryl-tRNA(Sec) from L-serine and tRNA(Sec): step 1/1. Catalyzes the attachment of serine to tRNA(Ser). Is also able to aminoacylate tRNA(Sec) with serine, to form the misacylated tRNA L-seryl-tRNA(Sec), which will be further converted into selenocysteinyl-tRNA(Sec). In Methanothrix thermoacetophila (strain DSM 6194 / JCM 14653 / NBRC 101360 / PT) (Methanosaeta thermophila), this protein is Type-2 serine--tRNA ligase.